The primary structure comprises 66 residues: Large ribosomal subunit protein uL29 (66 aa).

This sequence belongs to the universal ribosomal protein uL29 family.

This chain is Large ribosomal subunit protein uL29, found in Rhizobium leguminosarum bv. trifolii (strain WSM2304).